The sequence spans 784 residues: LPS-assembly protein LptD (784 aa).

The first 24 residues, 1 to 24, serve as a signal peptide directing secretion; the sequence is MKKRIPTLLATMIATALYSQQGLA. Disulfide bonds link Cys31/Cys724 and Cys173/Cys725.

Belongs to the LptD family. In terms of assembly, component of the lipopolysaccharide transport and assembly complex. Interacts with LptE and LptA. Contains two intramolecular disulfide bonds.

Its subcellular location is the cell outer membrane. Its function is as follows. Together with LptE, is involved in the assembly of lipopolysaccharide (LPS) at the surface of the outer membrane. In Escherichia coli O157:H7, this protein is LPS-assembly protein LptD.